We begin with the raw amino-acid sequence, 457 residues long: Chromogranin-A (457 aa).

A signal peptide spans 1 to 18; that stretch reads MRSAAVLALLLCAGQVTA. A disulfide bond links Cys35 and Cys56. The O-glycosylated at one site only in cerebrospinal fluid stretch occupies residues 41–59; that stretch reads SDTLSKPSPMPVSQECFET. The tract at residues 88 to 440 is disordered; the sequence is KERAHQQKKH…DQELESLSAI (353 aa). Over residues 116-144 the composition is skewed to basic and acidic residues; sequence ELKEAVEEPSSKDVMEKREDSKEAEKSGE. Phosphoserine is present on Ser142. A compositionally biased stretch (acidic residues) spans 171–180; the sequence is GEEEEEEEEA. 2 O-linked (GalNAc...) threonine glycosylation sites follow: Thr181 and Thr183. Residues 181-191 are O-glycosylated at one site only in cerebrospinal fluid; the sequence is TNTHPPASLPS. Positions 182–191 are enriched in polar residues; that stretch reads NTHPPASLPS. A Phosphotyrosine modification is found at Tyr194. Residues Ser203 and Ser218 each carry the phosphoserine modification. Residues 229-249 are compositionally biased toward acidic residues; sequence EEEEEEEEAEAGEEAVPEEEG. Thr251 carries O-linked (GalNAc...) threonine glycosylation. Composition is skewed to basic and acidic residues over residues 263–272 and 291–303; these read KEIRKGESRS and PEGK…SQQK. 2 positions are modified to phosphoserine: Ser270 and Ser300. Position 319 is a glycine amide (Gly319). A phosphoserine mark is found at Ser322, Ser333, and Ser371. A compositionally biased stretch (basic and acidic residues) spans 330-360; sequence ERLSKEWEDSKRWSKMDQLAKELTAEKRLEG. At Met372 the chain carries Methionine sulfoxide. Phosphoserine occurs at positions 398, 402, 424, and 438. Residues 414–431 are compositionally biased toward basic and acidic residues; the sequence is YPEEKKEEEGSANRRPED. Ser424 is a glycosylation site (O-linked (Xyl...) (chondroitin sulfate) serine). An Arginine amide modification is found at Arg456.

Belongs to the chromogranin/secretogranin protein family. In terms of assembly, self-interacts; self-assembly is promoted in vitro by chondroitin sulfate attachment which occurs at mildly acidic pH conditions. Interacts with SCG3. Interacts with ITPR1 in the secretory granules. In terms of processing, sulfated on tyrosine residues and/or contains sulfated glycans. O-glycosylated with core 1 or possibly core 8 glycans. Contains chondroitin sulfate (CS); CS attachment is pH-dependent, being observed at mildly acidic conditions of pH 5 but not at neutral pH, and promotes self-assembly in vitro. Post-translationally, proteolytic processing gives rise to an additional longer form of catestatin (residues 358-390) which displays a less potent catecholamine release-inhibitory activity. Plasmin-mediated proteolytic processing can give rise to additional shorter and longer forms of catestatin peptides. As to expression, detected in cerebrospinal fluid (at protein level). Detected in urine (at protein level). In terms of tissue distribution, found in the brain.

It is found in the secreted. The protein localises to the cytoplasmic vesicle. The protein resides in the secretory vesicle. It localises to the neuronal dense core vesicle. Strongly inhibits glucose induced insulin release from the pancreas. Its function is as follows. Inhibits catecholamine release from chromaffin cells and noradrenergic neurons by acting as a non-competitive nicotinic cholinergic antagonist. Displays antibacterial activity against Gram-positive bacteria S.aureus and M.luteus, and Gram-negative bacteria E.coli and P.aeruginosa. Can induce mast cell migration, degranulation and production of cytokines and chemokines. Acts as a potent scavenger of free radicals in vitro. May play a role in the regulation of cardiac function and blood pressure. Functionally, regulates granule biogenesis in endocrine cells by up-regulating the transcription of protease nexin 1 (SERPINE2) via a cAMP-PKA-SP1 pathway. This leads to inhibition of granule protein degradation in the Golgi complex which in turn promotes granule formation. In Homo sapiens (Human), this protein is Chromogranin-A (CHGA).